Reading from the N-terminus, the 21-residue chain is Protein YnfR (21 aa).

This is Protein YnfR from Escherichia coli (strain K12).